A 348-amino-acid polypeptide reads, in one-letter code: Trans-L-3-hydroxyproline dehydratase (348 aa).

The active-site Proton acceptor is Cys101. Substrate is bound by residues 102–103, Asp263, and 268–269; these read GH and GS.

This sequence belongs to the proline racemase family. Homodimer.

It carries out the reaction trans-3-hydroxy-L-proline = 1-pyrroline-2-carboxylate + H2O. Functionally, catalyzes the dehydration of trans-3-hydroxy-L-proline to delta-1-pyrroline-2-carboxylate (Pyr2C). The polypeptide is Trans-L-3-hydroxyproline dehydratase (l3hypdh) (Xenopus tropicalis (Western clawed frog)).